Reading from the N-terminus, the 170-residue chain is RNA pyrophosphohydrolase (170 aa).

Residues 6–149 (GFRPNVGIVI…KRDVYRRALK (144 aa)) form the Nudix hydrolase domain. The short motif at 38–59 (GGIDDGETPEQAMYRELYEEVG) is the Nudix box element.

The protein belongs to the Nudix hydrolase family. RppH subfamily. Requires a divalent metal cation as cofactor.

Functionally, accelerates the degradation of transcripts by removing pyrophosphate from the 5'-end of triphosphorylated RNA, leading to a more labile monophosphorylated state that can stimulate subsequent ribonuclease cleavage. This Aliivibrio fischeri (strain ATCC 700601 / ES114) (Vibrio fischeri) protein is RNA pyrophosphohydrolase.